The sequence spans 343 residues: Ubiquitin carboxyl-terminal hydrolase isozyme L5 (343 aa).

The 213-residue stretch at 6–218 folds into the UCH catalytic domain; sequence GWCTIESDPG…IRFNLMAVIK (213 aa). C83 (nucleophile) is an active-site residue. The active-site Proton donor is the H157. The segment at 242–266 is disordered; it reads LSELNSGSGGDNKEESGGATPTTKE. Residues 306–334 form the ULD domain; it reads NFTPLILNLIKGLAEKDNLQPLIQKAKDQ.

This sequence belongs to the peptidase C12 family. Component of the 19S (PA700) regulatory complex of the 26S proteasome.

Its subcellular location is the cytoplasm. The protein localises to the nucleus. The catalysed reaction is Thiol-dependent hydrolysis of ester, thioester, amide, peptide and isopeptide bonds formed by the C-terminal Gly of ubiquitin (a 76-residue protein attached to proteins as an intracellular targeting signal).. Protease that specifically cleaves 'Lys-48'-linked polyubiquitin chains. Deubiquitinating enzyme associated with the 19S regulatory subunit of the 26S proteasome. In Dictyostelium discoideum (Social amoeba), this protein is Ubiquitin carboxyl-terminal hydrolase isozyme L5 (uch2).